The following is a 102-amino-acid chain: NADH-quinone oxidoreductase subunit K (102 aa).

3 consecutive transmembrane segments (helical) span residues Leu6–Ala26, Ile30–Ala50, and Met63–Leu83.

This sequence belongs to the complex I subunit 4L family. As to quaternary structure, NDH-1 is composed of 14 different subunits. Subunits NuoA, H, J, K, L, M, N constitute the membrane sector of the complex.

Its subcellular location is the cell inner membrane. It catalyses the reaction a quinone + NADH + 5 H(+)(in) = a quinol + NAD(+) + 4 H(+)(out). NDH-1 shuttles electrons from NADH, via FMN and iron-sulfur (Fe-S) centers, to quinones in the respiratory chain. The immediate electron acceptor for the enzyme in this species is believed to be ubiquinone. Couples the redox reaction to proton translocation (for every two electrons transferred, four hydrogen ions are translocated across the cytoplasmic membrane), and thus conserves the redox energy in a proton gradient. This is NADH-quinone oxidoreductase subunit K from Rhodopseudomonas palustris (strain HaA2).